We begin with the raw amino-acid sequence, 163 residues long: NADH-quinone oxidoreductase subunit I (163 aa).

2 consecutive 4Fe-4S ferredoxin-type domains span residues 53–83 (LRRYPNGEERCIACKLCEAICPAQAITIEAG) and 94–123 (VRYDIDMVKCIYCGFCQEACPVEAIVEGPN). 8 residues coordinate [4Fe-4S] cluster: Cys-63, Cys-66, Cys-69, Cys-73, Cys-103, Cys-106, Cys-109, and Cys-113.

Belongs to the complex I 23 kDa subunit family. As to quaternary structure, NDH-1 is composed of 14 different subunits. Subunits NuoA, H, J, K, L, M, N constitute the membrane sector of the complex. The cofactor is [4Fe-4S] cluster.

It localises to the cell inner membrane. It carries out the reaction a quinone + NADH + 5 H(+)(in) = a quinol + NAD(+) + 4 H(+)(out). In terms of biological role, NDH-1 shuttles electrons from NADH, via FMN and iron-sulfur (Fe-S) centers, to quinones in the respiratory chain. The immediate electron acceptor for the enzyme in this species is believed to be ubiquinone. Couples the redox reaction to proton translocation (for every two electrons transferred, four hydrogen ions are translocated across the cytoplasmic membrane), and thus conserves the redox energy in a proton gradient. In Bartonella quintana (strain Toulouse) (Rochalimaea quintana), this protein is NADH-quinone oxidoreductase subunit I.